Here is a 277-residue protein sequence, read N- to C-terminus: Raffinose operon transcriptional regulatory protein RafR (277 aa).

Residues 176–274 enclose the HTH araC/xylS-type domain; it reads NLAVSYLQEN…GASPSYYRKS (99 aa). 2 DNA-binding regions (H-T-H motif) span residues 193 to 214 and 241 to 264; these read MDLC…KTHA and VQSI…KRYS.

Its function is as follows. Involved in the regulation of the raffinose-operon. The sequence is that of Raffinose operon transcriptional regulatory protein RafR (rafR) from Pediococcus pentosaceus.